Reading from the N-terminus, the 379-residue chain is Queuine tRNA-ribosyltransferase (379 aa).

Asp94 serves as the catalytic Proton acceptor. Substrate contacts are provided by residues 94-98 (DSGGF), Asp148, Gln191, and Gly218. An RNA binding region spans residues 249–255 (GVGSPDA). The active-site Nucleophile is Asp268. Residues 273–277 (TRIAR) are RNA binding; important for wobble base 34 recognition. Zn(2+)-binding residues include Cys306, Cys308, Cys311, and His337.

The protein belongs to the queuine tRNA-ribosyltransferase family. Homodimer. Within each dimer, one monomer is responsible for RNA recognition and catalysis, while the other monomer binds to the replacement base PreQ1. Zn(2+) serves as cofactor.

It carries out the reaction 7-aminomethyl-7-carbaguanine + guanosine(34) in tRNA = 7-aminomethyl-7-carbaguanosine(34) in tRNA + guanine. Its pathway is tRNA modification; tRNA-queuosine biosynthesis. In terms of biological role, catalyzes the base-exchange of a guanine (G) residue with the queuine precursor 7-aminomethyl-7-deazaguanine (PreQ1) at position 34 (anticodon wobble position) in tRNAs with GU(N) anticodons (tRNA-Asp, -Asn, -His and -Tyr). Catalysis occurs through a double-displacement mechanism. The nucleophile active site attacks the C1' of nucleotide 34 to detach the guanine base from the RNA, forming a covalent enzyme-RNA intermediate. The proton acceptor active site deprotonates the incoming PreQ1, allowing a nucleophilic attack on the C1' of the ribose to form the product. After dissociation, two additional enzymatic reactions on the tRNA convert PreQ1 to queuine (Q), resulting in the hypermodified nucleoside queuosine (7-(((4,5-cis-dihydroxy-2-cyclopenten-1-yl)amino)methyl)-7-deazaguanosine). The polypeptide is Queuine tRNA-ribosyltransferase (Macrococcus caseolyticus (strain JCSC5402) (Macrococcoides caseolyticum)).